The sequence spans 333 residues: 4-hydroxythreonine-4-phosphate dehydrogenase (333 aa).

Substrate is bound by residues His-136 and Thr-137. A divalent metal cation is bound by residues His-166, His-211, and His-266. Substrate-binding residues include Lys-274, Asn-283, and Arg-292.

It belongs to the PdxA family. In terms of assembly, homodimer. Zn(2+) serves as cofactor. Requires Mg(2+) as cofactor. It depends on Co(2+) as a cofactor.

The protein localises to the cytoplasm. It catalyses the reaction 4-(phosphooxy)-L-threonine + NAD(+) = 3-amino-2-oxopropyl phosphate + CO2 + NADH. It functions in the pathway cofactor biosynthesis; pyridoxine 5'-phosphate biosynthesis; pyridoxine 5'-phosphate from D-erythrose 4-phosphate: step 4/5. In terms of biological role, catalyzes the NAD(P)-dependent oxidation of 4-(phosphooxy)-L-threonine (HTP) into 2-amino-3-oxo-4-(phosphooxy)butyric acid which spontaneously decarboxylates to form 3-amino-2-oxopropyl phosphate (AHAP). The sequence is that of 4-hydroxythreonine-4-phosphate dehydrogenase from Acidithiobacillus ferrooxidans (strain ATCC 23270 / DSM 14882 / CIP 104768 / NCIMB 8455) (Ferrobacillus ferrooxidans (strain ATCC 23270)).